The following is a 275-amino-acid chain: Pyridoxal phosphate homeostasis protein (275 aa).

Serine 6 is subject to Phosphoserine. Lysine 47 is subject to N6-(pyridoxal phosphate)lysine. Position 69 is a phosphotyrosine (tyrosine 69). At lysine 125 the chain carries N6-succinyllysine. 2 positions are modified to phosphoserine: serine 226 and serine 244. Positions 251 to 263 (DYSKKPTPDKCAA) are enriched in basic and acidic residues. The tract at residues 251-275 (DYSKKPTPDKCAADVKAPLEVAQEH) is disordered.

This sequence belongs to the pyridoxal phosphate-binding protein YggS/PROSC family. Ubiquitous.

In terms of biological role, pyridoxal 5'-phosphate (PLP)-binding protein, which may be involved in intracellular homeostatic regulation of pyridoxal 5'-phosphate (PLP), the active form of vitamin B6. This is Pyridoxal phosphate homeostasis protein from Homo sapiens (Human).